Reading from the N-terminus, the 296-residue chain is Cobalamin trafficking protein CblD (296 aa).

The transit peptide at 1 to 38 (MANVLCNRARLVSYLPGFCSLVKRVVNPKAFSTAGSSG) directs the protein to the mitochondrion. The residue at position 203 (lysine 203) is an N6-acetyllysine.

Heterodimer with MMACHC. Forms a multiprotein complex with MMACHC, MTR and MTRR. Widely expressed at high levels.

Its subcellular location is the cytoplasm. The protein localises to the mitochondrion. Involved in cobalamin metabolism and trafficking. Plays a role in regulating the biosynthesis and the proportion of two coenzymes, methylcob(III)alamin (MeCbl) and 5'-deoxyadenosylcobalamin (AdoCbl). Promotes oxidation of cob(II)alamin bound to MMACHC. The processing of cobalamin in the cytosol occurs in a multiprotein complex composed of at least MMACHC, MMADHC, MTRR (methionine synthase reductase) and MTR (methionine synthase) which may contribute to shuttle safely and efficiently cobalamin towards MTR in order to produce methionine. The sequence is that of Cobalamin trafficking protein CblD from Homo sapiens (Human).